A 128-amino-acid polypeptide reads, in one-letter code: Large ribosomal subunit protein uL22 (128 aa).

The disordered stretch occupies residues 1–20 (MANGHRSQIKRERNAVKDTR). A compositionally biased stretch (basic and acidic residues) spans 9–20 (IKRERNAVKDTR).

It belongs to the universal ribosomal protein uL22 family. As to quaternary structure, part of the 50S ribosomal subunit.

Its function is as follows. This protein binds specifically to 23S rRNA; its binding is stimulated by other ribosomal proteins, e.g. L4, L17, and L20. It is important during the early stages of 50S assembly. It makes multiple contacts with different domains of the 23S rRNA in the assembled 50S subunit and ribosome. The globular domain of the protein is located near the polypeptide exit tunnel on the outside of the subunit, while an extended beta-hairpin is found that lines the wall of the exit tunnel in the center of the 70S ribosome. This Lachnospira eligens (strain ATCC 27750 / DSM 3376 / VPI C15-48 / C15-B4) (Eubacterium eligens) protein is Large ribosomal subunit protein uL22.